The chain runs to 366 residues: Leucine dehydrogenase (366 aa).

Lysine 82 is a catalytic residue. 182 to 188 (GVGNVAY) lines the NAD(+) pocket.

It belongs to the Glu/Leu/Phe/Val dehydrogenases family.

The catalysed reaction is L-leucine + NAD(+) + H2O = 4-methyl-2-oxopentanoate + NH4(+) + NADH + H(+). Its pathway is amino-acid degradation; L-leucine degradation; 4-methyl-2-oxopentanoate from L-leucine (dehydrogenase route): step 1/1. Catalyzes the reversible deamination of L-leucine to 4-methyl-2-oxopentanoate. In Bacillus cereus, this protein is Leucine dehydrogenase (ldh).